The primary structure comprises 158 residues: Endoribonuclease YbeY (158 aa).

Positions 124, 128, and 134 each coordinate Zn(2+).

It belongs to the endoribonuclease YbeY family. Requires Zn(2+) as cofactor.

It is found in the cytoplasm. In terms of biological role, single strand-specific metallo-endoribonuclease involved in late-stage 70S ribosome quality control and in maturation of the 3' terminus of the 16S rRNA. This chain is Endoribonuclease YbeY, found in Caldicellulosiruptor saccharolyticus (strain ATCC 43494 / DSM 8903 / Tp8T 6331).